A 486-amino-acid chain; its full sequence is Cardiolipin synthase A (486 aa).

2 helical membrane passes run 3–23 and 38–58; these read TFYT…IAGV and MAWL…YLSF. 2 consecutive PLD phosphodiesterase domains span residues 219-246 and 399-426; these read MDLR…VDPR and EGGL…DMRS. Residues histidine 224, lysine 226, aspartate 231, histidine 404, lysine 406, and aspartate 411 contribute to the active site.

Belongs to the phospholipase D family. Cardiolipin synthase subfamily. ClsA sub-subfamily.

It is found in the cell inner membrane. The enzyme catalyses 2 a 1,2-diacyl-sn-glycero-3-phospho-(1'-sn-glycerol) = a cardiolipin + glycerol. Its function is as follows. Catalyzes the reversible phosphatidyl group transfer from one phosphatidylglycerol molecule to another to form cardiolipin (CL) (diphosphatidylglycerol) and glycerol. The polypeptide is Cardiolipin synthase A (Escherichia fergusonii (strain ATCC 35469 / DSM 13698 / CCUG 18766 / IAM 14443 / JCM 21226 / LMG 7866 / NBRC 102419 / NCTC 12128 / CDC 0568-73)).